The following is a 268-amino-acid chain: Bis(5'-nucleosyl)-tetraphosphatase, symmetrical (268 aa).

It belongs to the Ap4A hydrolase family.

The enzyme catalyses P(1),P(4)-bis(5'-adenosyl) tetraphosphate + H2O = 2 ADP + 2 H(+). In terms of biological role, hydrolyzes diadenosine 5',5'''-P1,P4-tetraphosphate to yield ADP. This Nitrosomonas europaea (strain ATCC 19718 / CIP 103999 / KCTC 2705 / NBRC 14298) protein is Bis(5'-nucleosyl)-tetraphosphatase, symmetrical.